A 230-amino-acid chain; its full sequence is UPF0173 metal-dependent hydrolase MK1542 (230 aa).

It belongs to the UPF0173 family.

This Methanopyrus kandleri (strain AV19 / DSM 6324 / JCM 9639 / NBRC 100938) protein is UPF0173 metal-dependent hydrolase MK1542.